A 345-amino-acid polypeptide reads, in one-letter code: Hemin transport protein HmuS (345 aa).

The protein to Y.enterocolitica HemS.

In terms of biological role, part of the binding-protein-dependent transport system for hemin. This Yersinia pestis protein is Hemin transport protein HmuS (hmuS).